The primary structure comprises 1306 residues: Disease resistance protein Roq1 (1306 aa).

Positions 10-179 (RSYDVFLSFR…QILKDIFDKF (170 aa)) constitute a TIR domain. Residues 19–24 (RGEDTR) and Gly52 each bind NAD(+). Residue Glu86 is part of the active site. Residues 198–417 (KKLSSLLRMD…IDRLKDNPEG (220 aa)) form the NB-ARC domain. LRR repeat units lie at residues 200–224 (LSSL…GVGK), 252–275 (LQHH…EFVD), 417–440 (GEIM…IFLD), 599–622 (PSKL…AKRL), 645–669 (ITNL…VGFL), 670–693 (KNLI…IQSE), 716–739 (MTHL…IEHL), 741–763 (SLEN…IWRF), 784–807 (SNCT…IGNL), 808–831 (TSLN…IWGL), 832–857 (TSLT…AINH), 878–902 (LDLL…IWML), 904–926 (FLRI…LGHL), 927–949 (EHLE…VARL), 961–983 (FAIG…VFGS), 987–1010 (LGSV…MNQL), 1013–1036 (LEYL…SIKE), and 1045–1070 (LRIM…EYQN).

Belongs to the disease resistance TIR-NB-LRR family. In terms of assembly, homodimer.

It carries out the reaction NAD(+) + H2O = ADP-D-ribose + nicotinamide + H(+). The enzyme catalyses NAD(+) = 2'cADPR + nicotinamide + H(+). Functionally, disease resistance (R) protein that specifically recognizes the Xanthomonas and Pseudomonas effector proteins XopQ and HopQ1, and triggers cell death. An NAD(+) hydrolase (NADase): in response to activation, catalyzes cleavage of NAD(+) into ADP-D-ribose (ADPR) and nicotinamide; NAD(+) cleavage triggers a defense system that promotes cell death. Makes small amounts of 2' cyclic ADPR (2'cADPR). This is Disease resistance protein Roq1 from Nicotiana benthamiana.